The following is a 124-amino-acid chain: uncharacterized protein (124 aa).

Residues 83-100 (VTCFSLYTICYRIVLIWA) form a helical membrane-spanning segment.

The protein resides in the membrane. This is an uncharacterized protein from Saccharomyces cerevisiae (strain ATCC 204508 / S288c) (Baker's yeast).